Consider the following 168-residue polypeptide: Thiosulfate dehydrogenase [quinone] small subunit (168 aa).

Residues 6–26 (IIGIIFAILVVGWILATGQWA) traverse the membrane as a helical segment.

In terms of assembly, heterodimer of a large and a small subunit in a 2:2 stoichiometry. TQO may associate with the terminal oxidase formed by doxBCE. In terms of processing, the N-terminus is blocked. Post-translationally, glycosylated.

It is found in the cell membrane. It catalyses the reaction 6-decylubiquinone + 2 thiosulfate = 6-decylubiquinol + tetrathionate. With respect to regulation, inhibited by sulfite, metabisulfite and dithonite. TQO plays a role in sulfur oxidation and is proposed to couple sulfur oxidation to dioxygen reduction; caldariellaquinone or sulfolobus quinone seem to serve to transfer electrons to the electron transport chain terminal oxidase formed by DoxBCE. This chain is Thiosulfate dehydrogenase [quinone] small subunit (doxA), found in Acidianus ambivalens (Desulfurolobus ambivalens).